A 207-amino-acid polypeptide reads, in one-letter code: Urease accessory protein UreG (207 aa).

14 to 21 provides a ligand contact to GTP; the sequence is GPVGSGKT.

The protein belongs to the SIMIBI class G3E GTPase family. UreG subfamily. As to quaternary structure, homodimer. UreD, UreF and UreG form a complex that acts as a GTP-hydrolysis-dependent molecular chaperone, activating the urease apoprotein by helping to assemble the nickel containing metallocenter of UreC. The UreE protein probably delivers the nickel.

The protein localises to the cytoplasm. Functionally, facilitates the functional incorporation of the urease nickel metallocenter. This process requires GTP hydrolysis, probably effectuated by UreG. In Pseudomonas entomophila (strain L48), this protein is Urease accessory protein UreG.